The primary structure comprises 302 residues: Sulfate adenylyltransferase subunit 2 (302 aa).

A disordered region spans residues 280–302 (RQGRAIDHDQSGSMELKKRQGYF).

This sequence belongs to the PAPS reductase family. CysD subfamily. Heterodimer composed of CysD, the smaller subunit, and CysN.

The catalysed reaction is sulfate + ATP + H(+) = adenosine 5'-phosphosulfate + diphosphate. It functions in the pathway sulfur metabolism; hydrogen sulfide biosynthesis; sulfite from sulfate: step 1/3. In terms of biological role, with CysN forms the ATP sulfurylase (ATPS) that catalyzes the adenylation of sulfate producing adenosine 5'-phosphosulfate (APS) and diphosphate, the first enzymatic step in sulfur assimilation pathway. APS synthesis involves the formation of a high-energy phosphoric-sulfuric acid anhydride bond driven by GTP hydrolysis by CysN coupled to ATP hydrolysis by CysD. This Vibrio atlanticus (strain LGP32) (Vibrio splendidus (strain Mel32)) protein is Sulfate adenylyltransferase subunit 2.